We begin with the raw amino-acid sequence, 450 residues long: Pancreatic triacylglycerol lipase (450 aa).

3 disulfide bridges follow: cysteine 4/cysteine 10, cysteine 91/cysteine 102, and cysteine 91/cysteine 104. Catalysis depends on serine 153, which acts as the Nucleophile. An N-linked (GlcNAc...) asparagine glycan is attached at asparagine 167. The active-site Charge relay system is aspartate 177. Positions 188, 191, 193, and 196 each coordinate Ca(2+). An intrachain disulfide couples cysteine 238 to cysteine 262. The active-site Charge relay system is the histidine 264. Cystine bridges form between cysteine 286–cysteine 297, cysteine 300–cysteine 305, and cysteine 434–cysteine 450. The PLAT domain occupies 339 to 450 (WRYKVSVTLS…EEVLLTLNPC (112 aa)).

This sequence belongs to the AB hydrolase superfamily. Lipase family. Forms a 1:1 stoichiometric complex with (pro)colipase/CLPS.

The protein resides in the secreted. The catalysed reaction is a triacylglycerol + H2O = a diacylglycerol + a fatty acid + H(+). It carries out the reaction 1,2,3-tributanoylglycerol + H2O = dibutanoylglycerol + butanoate + H(+). It catalyses the reaction 1,2,3-tri-(9Z-octadecenoyl)-glycerol + H2O = di-(9Z)-octadecenoylglycerol + (9Z)-octadecenoate + H(+). The enzyme catalyses all-trans-retinyl hexadecanoate + H2O = all-trans-retinol + hexadecanoate + H(+). The catalysed reaction is 1,2-di-(9Z-octadecenoyl)-glycerol + H2O = (9Z-octadecenoyl)-glycerol + (9Z)-octadecenoate + H(+). Its activity is regulated as follows. Inhibited by bile salts, is reactivated by (pro)colipase/CLPS. Functionally, plays an important role in fat metabolism. It preferentially splits the esters of long-chain fatty acids at positions 1 and 3, producing mainly 2-monoacylglycerol and free fatty acids, and shows considerably higher activity against insoluble emulsified substrates than against soluble ones. This is Pancreatic triacylglycerol lipase (PNLIP) from Sus scrofa (Pig).